The following is a 353-amino-acid chain: Photosystem II protein D1 (353 aa).

At threonine 2 the chain carries N-acetylthreonine. Threonine 2 is modified (phosphothreonine). 3 helical membrane-spanning segments follow: residues 29–46 (YIGW…TATS), 118–133 (HFLL…EWEL), and 142–156 (WIAV…AATA). Chlorophyll a is bound at residue histidine 118. Tyrosine 126 is a binding site for pheophytin a. Residues aspartate 170 and glutamate 189 each contribute to the [CaMn4O5] cluster site. A helical transmembrane segment spans residues 197–218 (FHMLGVAGVFGGSLFSAMHGSL). Residue histidine 198 coordinates chlorophyll a. Residues histidine 215 and 264–265 (SF) each bind a quinone. Position 215 (histidine 215) interacts with Fe cation. Histidine 272 serves as a coordination point for Fe cation. The chain crosses the membrane as a helical span at residues 274–288 (FLAAWPVVGIWFTAL). Residues histidine 332, glutamate 333, aspartate 342, and alanine 344 each coordinate [CaMn4O5] cluster. Residues 345-353 (AVEAPSING) constitute a propeptide that is removed on maturation.

The protein belongs to the reaction center PufL/M/PsbA/D family. PSII is composed of 1 copy each of membrane proteins PsbA, PsbB, PsbC, PsbD, PsbE, PsbF, PsbH, PsbI, PsbJ, PsbK, PsbL, PsbM, PsbT, PsbX, PsbY, PsbZ, Psb30/Ycf12, at least 3 peripheral proteins of the oxygen-evolving complex and a large number of cofactors. It forms dimeric complexes. It depends on The D1/D2 heterodimer binds P680, chlorophylls that are the primary electron donor of PSII, and subsequent electron acceptors. It shares a non-heme iron and each subunit binds pheophytin, quinone, additional chlorophylls, carotenoids and lipids. D1 provides most of the ligands for the Mn4-Ca-O5 cluster of the oxygen-evolving complex (OEC). There is also a Cl(-1) ion associated with D1 and D2, which is required for oxygen evolution. The PSII complex binds additional chlorophylls, carotenoids and specific lipids. as a cofactor. Post-translationally, tyr-161 forms a radical intermediate that is referred to as redox-active TyrZ, YZ or Y-Z. C-terminally processed by CTPA; processing is essential to allow assembly of the oxygen-evolving complex and thus photosynthetic growth.

The protein localises to the plastid. It is found in the chloroplast thylakoid membrane. The catalysed reaction is 2 a plastoquinone + 4 hnu + 2 H2O = 2 a plastoquinol + O2. Its function is as follows. This is one of the two reaction center proteins of photosystem II. Photosystem II (PSII) is a light-driven water:plastoquinone oxidoreductase that uses light energy to abstract electrons from H(2)O, generating O(2) and a proton gradient subsequently used for ATP formation. It consists of a core antenna complex that captures photons, and an electron transfer chain that converts photonic excitation into a charge separation. The D1/D2 (PsbA/PsbD) reaction center heterodimer binds P680, the primary electron donor of PSII as well as several subsequent electron acceptors. This Pisum sativum (Garden pea) protein is Photosystem II protein D1.